The primary structure comprises 240 residues: Ribosomal RNA small subunit methyltransferase G (240 aa).

S-adenosyl-L-methionine-binding positions include Gly78, Phe83, 129–130 (AE), and Arg147. The interval 218–240 (RRQTSKKYPRKPGTPNKSPLLEN) is disordered.

This sequence belongs to the methyltransferase superfamily. RNA methyltransferase RsmG family.

The protein localises to the cytoplasm. Its function is as follows. Specifically methylates the N7 position of guanine in position 535 of 16S rRNA. The protein is Ribosomal RNA small subunit methyltransferase G of Staphylococcus haemolyticus (strain JCSC1435).